Reading from the N-terminus, the 274-residue chain is SWI/SNF chromatin-remodeling complex subunit snf30 (274 aa).

Polar residues-rich tracts occupy residues 123–150 (TLSYPPSNGDSSSYANGTDLHGNTGTMQ) and 157–167 (PSLTRSDSVSS). The interval 123–167 (TLSYPPSNGDSSSYANGTDLHGNTGTMQQEEKANPSLTRSDSVSS) is disordered.

In terms of assembly, component of the SWI/SNF global transcription activator complex composed of at least arp9, arp42, snf5, snf22, snf30, sbf59, sol1, ssr1, ssr2, ssr3, ssr4 and tfg3.

It is found in the cytoplasm. The protein localises to the nucleus. In terms of biological role, component of the SWI/SNF complex, an ATP-dependent chromatin remodeling complex, required for the positive and negative regulation of gene expression of a large number of genes. It changes chromatin structure by altering DNA-histone contacts within a nucleosome, leading eventually to a change in nucleosome position, thus facilitating or repressing binding of gene-specific transcription factors. In Schizosaccharomyces pombe (strain 972 / ATCC 24843) (Fission yeast), this protein is SWI/SNF chromatin-remodeling complex subunit snf30 (snf30).